A 341-amino-acid polypeptide reads, in one-letter code: MIEFRQVSKTFNKKKQKIDALKDVSFTVNRNDIFGVIGYSGAGKSTLVRLVNHLEAASNGQVIVDGHDITNYSDKMMRDIKKDIGMIFQHFNLLNSATVFKNVAMPLILSKKSKTEIKQRVTEMLEFVGLSDKKDQFPDELSGGQKQRVAIARALVTNPKILLCDEATSALDPATTASILTLLKNVNQTFGITIMMITHEMRVIKDICNRVAVMEKGKVVETGTVKEVFSHPKTTIAQNFVSTVIQTEPSTSLIRRLNDEQVGDFKDYKIFVEETQVTQPIINDLIQICGREVKILFSSMSEIQGNTVCYMWLRFNMDQQFEDTAINQYFKEKNIQFEEVH.

An ABC transporter domain is found at 2-241 (IEFRQVSKTF…PKTTIAQNFV (240 aa)). Position 38–45 (38–45 (GYSGAGKS)) interacts with ATP.

This sequence belongs to the ABC transporter superfamily. Methionine importer (TC 3.A.1.24) family. The complex is composed of two ATP-binding proteins (MetN), two transmembrane proteins (MetI) and a solute-binding protein (MetQ).

The protein resides in the cell membrane. The enzyme catalyses L-methionine(out) + ATP + H2O = L-methionine(in) + ADP + phosphate + H(+). The catalysed reaction is D-methionine(out) + ATP + H2O = D-methionine(in) + ADP + phosphate + H(+). Part of the ABC transporter complex MetNIQ involved in methionine import. Responsible for energy coupling to the transport system. This chain is Methionine import ATP-binding protein MetN 1, found in Staphylococcus aureus (strain USA300).